Here is a 212-residue protein sequence, read N- to C-terminus: 2-C-methyl-D-erythritol 4-phosphate cytidylyltransferase (212 aa).

It belongs to the IspD/TarI cytidylyltransferase family. IspD subfamily.

The enzyme catalyses 2-C-methyl-D-erythritol 4-phosphate + CTP + H(+) = 4-CDP-2-C-methyl-D-erythritol + diphosphate. It functions in the pathway isoprenoid biosynthesis; isopentenyl diphosphate biosynthesis via DXP pathway; isopentenyl diphosphate from 1-deoxy-D-xylulose 5-phosphate: step 2/6. Functionally, catalyzes the formation of 4-diphosphocytidyl-2-C-methyl-D-erythritol from CTP and 2-C-methyl-D-erythritol 4-phosphate (MEP). In Chlamydia caviae (strain ATCC VR-813 / DSM 19441 / 03DC25 / GPIC) (Chlamydophila caviae), this protein is 2-C-methyl-D-erythritol 4-phosphate cytidylyltransferase.